A 253-amino-acid chain; its full sequence is 5'/3'-nucleotidase SurE (253 aa).

Residues Asp8, Asp9, Ser39, and Asn92 each coordinate a divalent metal cation.

The protein belongs to the SurE nucleotidase family. It depends on a divalent metal cation as a cofactor.

The protein resides in the cytoplasm. The catalysed reaction is a ribonucleoside 5'-phosphate + H2O = a ribonucleoside + phosphate. It catalyses the reaction a ribonucleoside 3'-phosphate + H2O = a ribonucleoside + phosphate. It carries out the reaction [phosphate](n) + H2O = [phosphate](n-1) + phosphate + H(+). In terms of biological role, nucleotidase with a broad substrate specificity as it can dephosphorylate various ribo- and deoxyribonucleoside 5'-monophosphates and ribonucleoside 3'-monophosphates with highest affinity to 3'-AMP. Also hydrolyzes polyphosphate (exopolyphosphatase activity) with the preference for short-chain-length substrates (P20-25). Might be involved in the regulation of dNTP and NTP pools, and in the turnover of 3'-mononucleotides produced by numerous intracellular RNases (T1, T2, and F) during the degradation of various RNAs. This chain is 5'/3'-nucleotidase SurE, found in Salmonella typhimurium (strain LT2 / SGSC1412 / ATCC 700720).